We begin with the raw amino-acid sequence, 304 residues long: Secreted mono- and diacylglycerol lipase MDL2 (304 aa).

The N-terminal stretch at 1–19 (MILGRTISLFLGCSALVSG) is a signal peptide. Cys-55 and Cys-297 are joined by a disulfide. Residues Asn-102 and Asn-161 are each glycosylated (N-linked (GlcNAc...) asparagine). Ser-171 serves as the catalytic Nucleophile. Residue Asp-228 is part of the active site. N-linked (GlcNAc...) asparagine glycosylation is present at Asn-253. His-281 is an active-site residue.

It belongs to the AB hydrolase superfamily. Lipase family. Class 3 subfamily.

The protein localises to the secreted. Its subcellular location is the cell wall. The enzyme catalyses a monoacylglycerol + H2O = glycerol + a fatty acid + H(+). It catalyses the reaction a diacylglycerol + H2O = a monoacylglycerol + a fatty acid + H(+). Secreted lipase involved in Dandruff and seborrheic dermatitis (D/SD) probably via lipase-mediated breakdown of sebaceous lipids and release of irritating free fatty acids. Shows activity against monoglyceride and diglyceride substrates, but not triglyceride substrates and does not exhibit regio-selective production of diacylglycerols. Hydrolyzes both 1,2- and 1,3-diacylglycerols. Also hydrolyzes distearin, dilinolein and dipalmitolein. Cleaves oleic acid from 1,2 isomers of diolein on both the 1 and the 2 position of the glycerol backbone, resulting mainly in free fatty acids but no monoolein is detected. Shows activity on monoolein and liberates mostly free fatty acids, but can also perform the reverse reaction and produce diolein. The sequence is that of Secreted mono- and diacylglycerol lipase MDL2 from Malassezia globosa (strain ATCC MYA-4612 / CBS 7966) (Dandruff-associated fungus).